The primary structure comprises 391 residues: Protein kinase ORF14 (391 aa).

In terms of domain architecture, Protein kinase spans 109 to 391; the sequence is VPLRHTRGNI…ETLVDEFSKI (283 aa). Residue Lys-134 participates in ATP binding. The Proton acceptor role is filled by Asp-235.

The protein belongs to the protein kinase superfamily. Ser/Thr protein kinase family.

The enzyme catalyses L-seryl-[protein] + ATP = O-phospho-L-seryl-[protein] + ADP + H(+). It catalyses the reaction L-threonyl-[protein] + ATP = O-phospho-L-threonyl-[protein] + ADP + H(+). The sequence is that of Protein kinase ORF14 (ORF14) from Ictalurid herpesvirus 1 (strain Auburn) (IcHV-1).